A 612-amino-acid chain; its full sequence is uncharacterized protein (612 aa).

A coiled-coil region spans residues 39–100 (ERDHNLWEIE…KNISVKDLDE (62 aa)). The interval 219–241 (PLSSGESLPKKEEEVTKSPSFTL) is disordered. WD repeat units follow at residues 286–325 (TSTQCITHQPLPGSTPSFASGTENGVINVWRLDEDSNDNS), 337–376 (GHEGPVLCVCVPKATHHIFSGGHDGTIRCWSLPANQTSDS), 389–432 (GHED…FKIR), 434–470 (DSKQPLSMSVTDSRIAIAYNDGNVRFYDLDTQILVSQ), 483–523 (AVKD…LLAE), 526–565 (ISKVSLTGIAFAVNRPEFAISASDGRVFFLRQDDKLSTLE), and 574–612 (EEITDLSDILWINSPVDKLEHLIVGCKERISVYDRKYLP).

It is found in the cytoplasm. This is an uncharacterized protein from Schizosaccharomyces pombe (strain 972 / ATCC 24843) (Fission yeast).